The following is a 474-amino-acid chain: MECHYSEAQLASLLLPYLERFDENAINGLASELKSHGISVYAAAGFDPNVGSSLTFKKEVPPSDTSILEDVDHVNLYSEQDNFHLSMLDMMDFHTPDIMDIGLFTDVQHEGDPVDELELSSDTRSSLSPSSHNTTTGHETGLSSVTPPQSYWTSDNLVSTRALPTTGDKQLSPQRRTEIADISSLPTCQQISLEPQCHSVMEAPCHGKEVTKRNKRSRTEAQEASNSPCASSTADSQTNPAPLRLRSVFGPGTKYNLSHKSLHEISDISENCIRPDLVEFLEERLTRWKKTGFWHQDQIPEPTASGAGREKLIDAYSCICRLESRMKDDQILNRVAVVMLHTAYEQACQEWRHAGTHQRKGRGRGDATTVIDEILSELHEDWDVGDRKRYHRSRFHDKKRFGKRWLVLIKSLGVGILLCSSQRLASAVYVLPFQITLFILDTNLSESAATRRFLPATCCRRWFAVSNSLRLNSC.

Disordered regions lie at residues 114-153 (VDELELSSDTRSSLSPSSHNTTTGHETGLSSVTPPQSYWT) and 207-242 (GKEVTKRNKRSRTEAQEASNSPCASSTADSQTNPAP). Over residues 120 to 131 (SSDTRSSLSPSS) the composition is skewed to low complexity. The span at 132–153 (HNTTTGHETGLSSVTPPQSYWT) shows a compositional bias: polar residues. Basic and acidic residues predominate over residues 207 to 221 (GKEVTKRNKRSRTEA). Residues 222 to 240 (QEASNSPCASSTADSQTNP) show a composition bias toward polar residues.

Belongs to the POU transcription factor family. Class-3 subfamily.

The protein resides in the nucleus. Transcription factor; part of the fragmented gene cluster that mediates the biosynthesis of fusarochromene, a tryptophan-derived metabolite closely related to a group of mycotoxins including fusarochromanone. In Fusarium equiseti (Fusarium scirpi), this protein is Transcription factor fscB.